The chain runs to 298 residues: UDP-N-acetylenolpyruvoylglucosamine reductase (298 aa).

The region spanning 27–206 (VGGPAQRLYR…QQQIRRLLRQ (180 aa)) is the FAD-binding PCMH-type domain. Residue R171 is part of the active site. The active-site Proton donor is S220. E290 is a catalytic residue.

It belongs to the MurB family. FAD is required as a cofactor.

The protein resides in the cytoplasm. It catalyses the reaction UDP-N-acetyl-alpha-D-muramate + NADP(+) = UDP-N-acetyl-3-O-(1-carboxyvinyl)-alpha-D-glucosamine + NADPH + H(+). It participates in cell wall biogenesis; peptidoglycan biosynthesis. Its function is as follows. Cell wall formation. This Nitrosococcus oceani (strain ATCC 19707 / BCRC 17464 / JCM 30415 / NCIMB 11848 / C-107) protein is UDP-N-acetylenolpyruvoylglucosamine reductase.